A 283-amino-acid polypeptide reads, in one-letter code: Bifunctional protein FolD (283 aa).

NADP(+) contacts are provided by residues 166 to 168 and isoleucine 232; that span reads GAS.

Belongs to the tetrahydrofolate dehydrogenase/cyclohydrolase family. Homodimer.

The enzyme catalyses (6R)-5,10-methylene-5,6,7,8-tetrahydrofolate + NADP(+) = (6R)-5,10-methenyltetrahydrofolate + NADPH. It carries out the reaction (6R)-5,10-methenyltetrahydrofolate + H2O = (6R)-10-formyltetrahydrofolate + H(+). It functions in the pathway one-carbon metabolism; tetrahydrofolate interconversion. Functionally, catalyzes the oxidation of 5,10-methylenetetrahydrofolate to 5,10-methenyltetrahydrofolate and then the hydrolysis of 5,10-methenyltetrahydrofolate to 10-formyltetrahydrofolate. The polypeptide is Bifunctional protein FolD (Mannheimia succiniciproducens (strain KCTC 0769BP / MBEL55E)).